We begin with the raw amino-acid sequence, 247 residues long: E3 ubiquitin-protein ligase RNF182 (247 aa).

An RING-type zinc finger spans residues 20–68 (CKICYNRYNLKQRKPKVLECCHRVCAKCLYKIIDFGDSPQGVIVCPFCR). 2 helical membrane-spanning segments follow: residues 184–204 (VLVW…IYLL) and 211–231 (LGVV…VYGF).

Interacts with ATP6V0C. As to expression, up-regulated in neuronal cells subjected to cell death-inducing injuries, such as oxygen and glucose deprivation (at protein level). Could be up-regulated in Alzheimer disease brains. Highly expressed in innate immune organs such as lymph nodes and spleen and in immune cells such as macrophages and dendritic cells.

The protein localises to the membrane. It localises to the cytoplasm. It catalyses the reaction S-ubiquitinyl-[E2 ubiquitin-conjugating enzyme]-L-cysteine + [acceptor protein]-L-lysine = [E2 ubiquitin-conjugating enzyme]-L-cysteine + N(6)-ubiquitinyl-[acceptor protein]-L-lysine.. Its pathway is protein modification; protein ubiquitination. Its function is as follows. E3 ubiquitin-protein ligase that mediates the ubiquitination of ATP6V0C and targets it to degradation via the ubiquitin-proteasome pathway. Also plays a role in the inhibition of TLR-triggered innate immune response by mediating 'Lys'-48-linked ubiquitination and subsequent degradation of NF-kappa-B component RELA. The protein is E3 ubiquitin-protein ligase RNF182 (RNF182) of Homo sapiens (Human).